A 93-amino-acid polypeptide reads, in one-letter code: MKANIHPQFETVEVSCATCGKQHPIGTTVTSIKIETCSNCHPFYTGAQTFVVKAGPVDKFNKRYGITQDQKVKTVSSNADNQKETTEELIKNK.

The disordered stretch occupies residues 72–93; sequence VKTVSSNADNQKETTEELIKNK. Positions 81–93 are enriched in basic and acidic residues; it reads NQKETTEELIKNK.

Belongs to the bacterial ribosomal protein bL31 family. Type A subfamily. As to quaternary structure, part of the 50S ribosomal subunit.

Its function is as follows. Binds the 23S rRNA. The polypeptide is Large ribosomal subunit protein bL31 (Onion yellows phytoplasma (strain OY-M)).